The chain runs to 396 residues: Elongation factor Tu (396 aa).

The tr-type G domain maps to 10–206 (KPHVNVGTIG…ALDTYIPTPE (197 aa)). The tract at residues 19–26 (GHVDHGKT) is G1. Residue 19 to 26 (GHVDHGKT) coordinates GTP. Position 26 (Thr26) interacts with Mg(2+). The interval 60–64 (GITIN) is G2. Positions 81–84 (DCPG) are G3. GTP is bound by residues 81–85 (DCPGH) and 136–139 (NKCD). The tract at residues 136–139 (NKCD) is G4. The interval 174 to 176 (SAK) is G5.

The protein belongs to the TRAFAC class translation factor GTPase superfamily. Classic translation factor GTPase family. EF-Tu/EF-1A subfamily. In terms of assembly, monomer.

Its subcellular location is the cytoplasm. The enzyme catalyses GTP + H2O = GDP + phosphate + H(+). Functionally, GTP hydrolase that promotes the GTP-dependent binding of aminoacyl-tRNA to the A-site of ribosomes during protein biosynthesis. This chain is Elongation factor Tu, found in Cupriavidus pinatubonensis (strain JMP 134 / LMG 1197) (Cupriavidus necator (strain JMP 134)).